Consider the following 154-residue polypeptide: Transcriptional repressor NrdR (154 aa).

Residues cysteine 3–cysteine 34 fold into a zinc finger. The ATP-cone domain occupies leucine 46–aspartate 136.

Belongs to the NrdR family. Requires Zn(2+) as cofactor.

Negatively regulates transcription of bacterial ribonucleotide reductase nrd genes and operons by binding to NrdR-boxes. This is Transcriptional repressor NrdR from Mycolicibacterium vanbaalenii (strain DSM 7251 / JCM 13017 / BCRC 16820 / KCTC 9966 / NRRL B-24157 / PYR-1) (Mycobacterium vanbaalenii).